The chain runs to 234 residues: Enolase-phosphatase E1 (234 aa).

2 residues coordinate Mg(2+): Asp10 and Glu12. Residues 125–126 and Lys162 contribute to the substrate site; that span reads SS. Asp188 lines the Mg(2+) pocket.

The protein belongs to the HAD-like hydrolase superfamily. MasA/MtnC family. In terms of assembly, monomer. Mg(2+) is required as a cofactor.

It localises to the cytoplasm. It is found in the nucleus. It catalyses the reaction 5-methylsulfanyl-2,3-dioxopentyl phosphate + H2O = 1,2-dihydroxy-5-(methylsulfanyl)pent-1-en-3-one + phosphate. The protein operates within amino-acid biosynthesis; L-methionine biosynthesis via salvage pathway; L-methionine from S-methyl-5-thio-alpha-D-ribose 1-phosphate: step 3/6. It participates in amino-acid biosynthesis; L-methionine biosynthesis via salvage pathway; L-methionine from S-methyl-5-thio-alpha-D-ribose 1-phosphate: step 4/6. Bifunctional enzyme that catalyzes the enolization of 2,3-diketo-5-methylthiopentyl-1-phosphate (DK-MTP-1-P) into the intermediate 2-hydroxy-3-keto-5-methylthiopentenyl-1-phosphate (HK-MTPenyl-1-P), which is then dephosphorylated to form the acireductone 1,2-dihydroxy-3-keto-5-methylthiopentene (DHK-MTPene). The sequence is that of Enolase-phosphatase E1 (utr4) from Neurospora crassa (strain ATCC 24698 / 74-OR23-1A / CBS 708.71 / DSM 1257 / FGSC 987).